Consider the following 36-residue polypeptide: APSEPHHPGDQATPDQLAQYYSDLYQYITFITRPRF.

Phe36 is subject to Phenylalanine amide.

Belongs to the NPY family.

It localises to the secreted. Hormone secreted by pancreatic cells that acts as a regulator of pancreatic and gastrointestinal functions. In Aquarana catesbeiana (American bullfrog), this protein is Pancreatic polypeptide (ppy).